A 466-amino-acid polypeptide reads, in one-letter code: Argininosuccinate lyase (466 aa).

3 residues coordinate 2-(N(omega)-L-arginino)succinate: Ser27, Asn114, and Thr159. Catalysis depends on His160, which acts as the Proton acceptor. Ser281 functions as the Proton donor in the catalytic mechanism. 2-(N(omega)-L-arginino)succinate contacts are provided by Asn289, Tyr321, Gln326, and Lys329.

The protein belongs to the lyase 1 family. Argininosuccinate lyase subfamily. As to quaternary structure, homotetramer. Eye lens.

The enzyme catalyses 2-(N(omega)-L-arginino)succinate = fumarate + L-arginine. It functions in the pathway amino-acid biosynthesis; L-arginine biosynthesis; L-arginine from L-ornithine and carbamoyl phosphate: step 3/3. Functionally, delta crystallin, the principal crystallin in embryonic lens, is found only in birds and reptiles. This protein may also function as an enzymatically active argininosuccinate lyase. This chain is Argininosuccinate lyase (ASL2), found in Gallus gallus (Chicken).